A 372-amino-acid polypeptide reads, in one-letter code: N-methyl-L-tryptophan oxidase (372 aa).

Position 4–34 (4–34) interacts with FAD; that stretch reads DLIIIGSGSVGAAAGYYATRAGLNVLMTDAH. Cys308 carries the S-8alpha-FAD cysteine modification.

Belongs to the MSOX/MTOX family. MTOX subfamily. As to quaternary structure, monomer. FAD serves as cofactor.

It catalyses the reaction N(alpha)-methyl-L-tryptophan + O2 + H2O = L-tryptophan + formaldehyde + H2O2. In terms of biological role, catalyzes the oxidative demethylation of N-methyl-L-tryptophan. The polypeptide is N-methyl-L-tryptophan oxidase (Escherichia coli O157:H7).